The sequence spans 462 residues: tRNA modification GTPase MnmE (462 aa).

The (6S)-5-formyl-5,6,7,8-tetrahydrofolate site is built by Arg22, Glu87, and Arg126. One can recognise a TrmE-type G domain in the interval Gly220–Leu382. K(+) is bound at residue Asn230. GTP is bound by residues Asn230–Ser235, Ser249–Thr255, and Asp274–Gly277. Ser234 contacts Mg(2+). 3 residues coordinate K(+): Ser249, Ile251, and Thr254. Position 255 (Thr255) interacts with Mg(2+). Lys462 contributes to the (6S)-5-formyl-5,6,7,8-tetrahydrofolate binding site.

It belongs to the TRAFAC class TrmE-Era-EngA-EngB-Septin-like GTPase superfamily. TrmE GTPase family. As to quaternary structure, homodimer. Heterotetramer of two MnmE and two MnmG subunits. The cofactor is K(+).

It is found in the cytoplasm. Exhibits a very high intrinsic GTPase hydrolysis rate. Involved in the addition of a carboxymethylaminomethyl (cmnm) group at the wobble position (U34) of certain tRNAs, forming tRNA-cmnm(5)s(2)U34. This Moorella thermoacetica (strain ATCC 39073 / JCM 9320) protein is tRNA modification GTPase MnmE.